Consider the following 359-residue polypeptide: Guanine nucleotide-binding protein subunit alpha-11 (359 aa).

Residues C9 and C10 are each lipidated (S-palmitoyl cysteine). The 322-residue stretch at 38–359 (RELKLLLLGT…QHNLKEYNLV (322 aa)) folds into the G-alpha domain. Positions 41 to 54 (KLLLLGTGESGKST) are G1 motif. GTP contacts are provided by residues 46–53 (GTGESGKS) and 180–183 (LRVR). Position 53 (S53) interacts with Mg(2+). The interval 178–186 (DVLRVRVPT) is G2 motif. T186 contributes to the Mg(2+) binding site. The segment at 201 to 210 (FRMVDVGGQR) is G3 motif. The tract at residues 270 to 277 (ILFLNKKD) is G4 motif. Residues 274–277 (NKKD) and A331 each bind GTP. Residues 329-334 (TCATDT) are G5 motif.

This sequence belongs to the G-alpha family. G(q) subfamily. G proteins are composed of 3 units; alpha, beta and gamma. The alpha chain contains the guanine nucleotide binding site.

Its subcellular location is the cell membrane. The protein resides in the cytoplasm. The enzyme catalyses GTP + H2O = GDP + phosphate + H(+). Guanine nucleotide-binding proteins (G proteins) function as transducers downstream of G protein-coupled receptors (GPCRs) in numerous signaling cascades. The alpha chain contains the guanine nucleotide binding site and alternates between an active, GTP-bound state and an inactive, GDP-bound state. Signaling by an activated GPCR promotes GDP release and GTP binding. The alpha subunit has a low GTPase activity that converts bound GTP to GDP, thereby terminating the signal. Both GDP release and GTP hydrolysis are modulated by numerous regulatory proteins. Signaling is mediated via phospholipase C-beta-dependent inositol lipid hydrolysis for signal propagation: activates phospholipase C-beta: following GPCR activation, GNA11 activates PLC-beta (PLCB1, PLCB2, PLCB3 or PLCB4), leading to production of diacylglycerol (DAG) and inositol 1,4,5-trisphosphate (IP3). In Xenopus laevis (African clawed frog), this protein is Guanine nucleotide-binding protein subunit alpha-11 (gna11).